The chain runs to 398 residues: Immunoglobulin heavy constant gamma 2A (398 aa).

Ig-like domains lie at Pro5 to Glu97, Pro120 to Ser219, and Pro228 to Ser324. Cystine bridges form between Cys26–Cys81, Cys143–Cys203, and Cys249–Cys307. The N-linked (GlcNAc...) asparagine glycan is linked to Asn179. A helical transmembrane segment spans residues Gly345–Cys362. Topologically, residues Tyr363–Ala398 are cytoplasmic.

The protein localises to the cell membrane. The protein is Immunoglobulin heavy constant gamma 2A of Mus musculus (Mouse).